A 54-amino-acid chain; its full sequence is UPF0181 protein APJL_0874 (54 aa).

Belongs to the UPF0181 family.

This is UPF0181 protein APJL_0874 from Actinobacillus pleuropneumoniae serotype 3 (strain JL03).